The chain runs to 58 residues: Microcin J25 (58 aa).

Residues Met-1 to Lys-37 constitute a propeptide that is removed on maturation. Positions Gly-38–Glu-45 form a cross-link, isoglutamyl glycine isopeptide (Gly-Glu).

Its subcellular location is the secreted. Peptide antibiotic that functions through inhibition of the bacterial DNA-dependent RNA polymerase (RNAP). Inhibits transcription by binding deep within RNAP secondary channel, where it sterically blocks the folding of the trigger loop, which is essential for efficient catalysis. In addition, it also seems to restrict access of nucleotide substrates to the catalytic center, and shows a partially competitive mode of inhibition with them. Exhibits potent bacteriocidal activity against a range of Enterobacteriaceae, including several pathogenic E.coli, Salmonella and Shigella strains. Also acts on the cytoplasmic membrane of Salmonella newport, producing alteration of membrane permeability and disruption of the subsequent gradient dissipation, which inhibits several processes essential for cell viability, such as oxygen consumption. Induces bacterial filamentation in susceptible cells in a non-SOS-dependent way, but this phenotype may result from impaired transcription of genes coding for cell division proteins. The sequence is that of Microcin J25 (mcjA) from Escherichia coli.